Consider the following 493-residue polypeptide: Tripartite motif-containing protein 5 (493 aa).

The residue at position 2 (A2) is an N-acetylalanine. An RING-type zinc finger spans residues 15-59 (CPICLELLTQPLSLDCGHSFCQACLTANHKKSMLDKGESSCPVCR). Residue S86 is modified to Phosphoserine. The B box-type zinc-finger motif lies at 90-132 (QKVDHCAHHGEKLLLFCQEDGKVICWLCERSQEHRGHHTFLTE). Zn(2+)-binding residues include C95, H98, C117, and H123. Residues 131–240 (TEEVAREYQV…LISDLERRLQ (110 aa)) are a coiled coil. Residues 185 to 198 (FEQLRDILDWEESN) are required for interaction with GABARAP and for autophagy. Residues 281 to 493 (LKGMLEVFRE…VPMTLCSPSS (213 aa)) enclose the B30.2/SPRY domain.

This sequence belongs to the TRIM/RBCC family. Can form homodimers and homotrimers. In addition to lower-order dimerization, also exhibits a higher-order multimerization and both low- and high-order multimerizations are essential for its restriction activity. Interacts with BTBD1 and BTBD2. Interacts with PSMC4, PSMC5, PSMD7 and HSPA8/HSC70. Interacts (via B30.2/SPRY domain) with HSPA1A/B. Interacts with PSMC2, MAP3K7/TAK1, TAB2 and TAB3. Interacts with SQSTM1. Interacts with TRIM6 and TRIM34. Interacts with ULK1 (phosphorylated form), GABARAP, GABARAPL1, GABARAPL2, MAP1LC3A, MAP1LC3C and BECN1. In terms of processing, degraded in a proteasome-independent fashion in the absence of viral infection but in a proteasome-dependent fashion following exposure to restriction sensitive virus. Post-translationally, autoubiquitinated in a RING finger- and UBE2D2-dependent manner. Monoubiquitinated by TRIM21. Deubiquitinated by Yersinia YopJ. Ubiquitination may not lead to proteasomal degradation.

The protein localises to the cytoplasm. Its subcellular location is the nucleus. It catalyses the reaction S-ubiquitinyl-[E2 ubiquitin-conjugating enzyme]-L-cysteine + [acceptor protein]-L-lysine = [E2 ubiquitin-conjugating enzyme]-L-cysteine + N(6)-ubiquitinyl-[acceptor protein]-L-lysine.. It functions in the pathway protein modification; protein ubiquitination. Capsid-specific restriction factor that prevents infection from non-host-adapted retroviruses. Blocks viral replication early in the life cycle, after viral entry but before reverse transcription. In addition to acting as a capsid-specific restriction factor, also acts as a pattern recognition receptor that activates innate immune signaling in response to the retroviral capsid lattice. Binding to the viral capsid triggers its E3 ubiquitin ligase activity, and in concert with the heterodimeric ubiquitin conjugating enzyme complex UBE2V1-UBE2N (also known as UBC13-UEV1A complex) generates 'Lys-63'-linked polyubiquitin chains, which in turn are catalysts in the autophosphorylation of the MAP3K7/TAK1 complex (includes TAK1, TAB2, and TAB3). Activation of the MAP3K7/TAK1 complex by autophosphorylation results in the induction and expression of NF-kappa-B and MAPK-responsive inflammatory genes, thereby leading to an innate immune response in the infected cell. Plays a role in regulating autophagy through activation of autophagy regulator BECN1 by causing its dissociation from its inhibitors BCL2 and TAB2. This Pan troglodytes (Chimpanzee) protein is Tripartite motif-containing protein 5 (TRIM5).